Consider the following 140-residue polypeptide: Phosphopantetheine adenylyltransferase (140 aa).

Residue serine 9 coordinates substrate. ATP contacts are provided by residues 9 to 10 (SF) and histidine 17. Residues lysine 41, threonine 74, and arginine 88 each contribute to the substrate site. ATP contacts are provided by residues 89-91 (GLR), glutamate 99, and 124-130 (KRSLSST).

Belongs to the bacterial CoaD family. Homohexamer. It depends on Mg(2+) as a cofactor.

Its subcellular location is the cytoplasm. It catalyses the reaction (R)-4'-phosphopantetheine + ATP + H(+) = 3'-dephospho-CoA + diphosphate. It functions in the pathway cofactor biosynthesis; coenzyme A biosynthesis; CoA from (R)-pantothenate: step 4/5. Its function is as follows. Reversibly transfers an adenylyl group from ATP to 4'-phosphopantetheine, yielding dephospho-CoA (dPCoA) and pyrophosphate. The sequence is that of Phosphopantetheine adenylyltransferase from Mycoplasma mycoides subsp. mycoides SC (strain CCUG 32753 / NCTC 10114 / PG1).